A 627-amino-acid polypeptide reads, in one-letter code: Glycerophosphodiester phosphodiesterase domain-containing protein 4 (627 aa).

Residues 1-17 (MLLFLWIETSNEYFNFD) are Cytoplasmic-facing. The helical transmembrane segment at 18–38 (WVIFLGTGYWFYWSIFILSLA) threads the bilayer. Residue Gly39 is a topological domain, extracellular. The helical transmembrane segment at 40–60 (ILTAYSSLLLLLGLLLLWEGI) threads the bilayer. The Cytoplasmic portion of the chain corresponds to 61–69 (ELYLHLCHK). The chain crosses the membrane as a helical span at residues 70–90 (ILILLVILPCVILMFIICKFW). Over 91 to 107 (KERWLVAGLSLQIFAPY) the chain is Extracellular. A helical membrane pass occupies residues 108 to 128 (VHLVSITVMVILFWPVAIYVA). Residues 129-162 (RLEREVRMRRYRMTHSEKKRLKKCNVIARLRGLQ) lie on the Cytoplasmic side of the membrane. A helical transmembrane segment spans residues 163–183 (VAVGLPFLLIFLSLCLMPLGI). At 184-468 (YSPCIQEKEN…PHFFMTPKFY (285 aa)) the chain is on the extracellular side. The region spanning 198–457 (PTLFGHRGAP…DNIGLLSQLN (260 aa)) is the GP-PDE domain. Residues Glu230, Asp232, and His245 each coordinate a divalent metal cation. 2 N-linked (GlcNAc...) asparagine glycosylation sites follow: Asn308 and Asn397. A helical transmembrane segment spans residues 469-489 (MFIWLLVDIISVLFIVAIFCF). Topologically, residues 490–627 (HWRRETIKEK…TMPSVEVPYP (138 aa)) are cytoplasmic.

The protein belongs to the glycerophosphoryl diester phosphodiesterase family.

The protein resides in the membrane. The sequence is that of Glycerophosphodiester phosphodiesterase domain-containing protein 4 (GDPD4) from Macaca fascicularis (Crab-eating macaque).